The following is a 142-amino-acid chain: Peptide methionine sulfoxide reductase MsrB (142 aa).

The region spanning 2–125 (LKKDKSELTD…NSAAIQFIPY (124 aa)) is the MsrB domain. Residue cysteine 114 is the Nucleophile of the active site.

Belongs to the MsrB Met sulfoxide reductase family.

It carries out the reaction L-methionyl-[protein] + [thioredoxin]-disulfide + H2O = L-methionyl-(R)-S-oxide-[protein] + [thioredoxin]-dithiol. The polypeptide is Peptide methionine sulfoxide reductase MsrB (Staphylococcus aureus (strain bovine RF122 / ET3-1)).